The primary structure comprises 242 residues: UPF0173 metal-dependent hydrolase APE_1117 (242 aa).

This sequence belongs to the UPF0173 family.

The sequence is that of UPF0173 metal-dependent hydrolase APE_1117 from Aeropyrum pernix (strain ATCC 700893 / DSM 11879 / JCM 9820 / NBRC 100138 / K1).